The primary structure comprises 417 residues: MSLSKKLTLDKLDVRGKRVIMRVDFNVPMKKNQITNNQRIKASIPSIKYCLDNGAKAVVLMSHLGRPDGVPMPDKYSLAPVAVELKSLLGKDVLFLKDCVGAEVEKACANPAPGSVILLENLRFHVEEEGKGQDPSGKKIKAEPDKIEAFRASLSKLGDVYVNDAFGTAHRAHSSMVGVNLPHKASGFLMKKELDYFAKALENPVRPFLAILGGAKVADKIQLIKNMLDKVNEMIIGGGMAYTFLKVLNNMEIGASLFDEEGAKIVKDIMAKAQKNGVRITFPVDFVTGDKFDENAQVGKATVASGISPGWMGLDCGPESNKNHAQVVAQARLIVWNGPLGVFEWDAFAKGTKALMDEIVKATSKGCITVIGGGDTATCCAKWNTEDKVSHVSTGGGASLELLEGKILPGVEALSNM.

An N-acetylserine modification is found at S2. Phosphoserine is present on residues S2 and S4. N6-acetyllysine is present on K11. The (2R)-3-phosphoglycerate site is built by V23, D24, F25, N26, Q38, and R39. An N6-acetyllysine modification is found at K48. Residues S62, H63, G65, and R66 each coordinate (2R)-3-phosphoglycerate. Residues K75, K86, and K97 each carry the N6-acetyllysine modification. L122 and R123 together coordinate (2R)-3-phosphoglycerate. 2 positions are modified to N6-acetyllysine: K131 and K146. (2R)-3-phosphoglycerate-binding residues include H170 and R171. Y196 carries the post-translational modification Phosphotyrosine. K199 is subject to N6-acetyllysine. An ADP-binding site is contributed by G214. Residue G214 coordinates CDP. 2 residues coordinate AMP: A215 and K216. Residue A215 coordinates ATP. A215 provides a ligand contact to Mg(2+). 2 residues coordinate Mg(2+): A218 and D219. D219 contacts CDP. K220 contacts AMP. ATP is bound at residue K220. G238 contributes to the ADP binding site. G238 is a CDP binding site. G239 contributes to the AMP binding site. ATP is bound at residue G239. Residues K267 and K291 each carry the N6-acetyllysine modification. G313 is a binding site for AMP. G313 is an ATP binding site. 2 residues coordinate CDP: G338 and F343. F343 serves as a coordination point for ADP. Position 344 (E344) interacts with AMP. ATP is bound by residues E344, D375, and T376. D375 contributes to the Mg(2+) binding site.

The protein belongs to the phosphoglycerate kinase family. Monomer. Requires Mg(2+) as cofactor. In terms of tissue distribution, mainly found in round spermatids. Localized on the principle piece in the sperm (at protein level). Testis-specific. Expression significantly decreased in the testis of elderly men.

The protein resides in the cytoplasm. It carries out the reaction (2R)-3-phosphoglycerate + ATP = (2R)-3-phospho-glyceroyl phosphate + ADP. It functions in the pathway carbohydrate degradation; glycolysis; pyruvate from D-glyceraldehyde 3-phosphate: step 2/5. Essential for sperm motility and male fertility. Not required for the completion of spermatogenesis. This Homo sapiens (Human) protein is Phosphoglycerate kinase 2 (PGK2).